A 234-amino-acid polypeptide reads, in one-letter code: 3,4-dihydroxy-2-butanone 4-phosphate synthase (234 aa).

D-ribulose 5-phosphate contacts are provided by residues 39 to 40 (RE), D44, 152 to 156 (RRGHT), and E176. E40 provides a ligand contact to Mg(2+). A Mg(2+)-binding site is contributed by H155.

This sequence belongs to the DHBP synthase family. In terms of assembly, homodimer. Mg(2+) is required as a cofactor. It depends on Mn(2+) as a cofactor.

The enzyme catalyses D-ribulose 5-phosphate = (2S)-2-hydroxy-3-oxobutyl phosphate + formate + H(+). It participates in cofactor biosynthesis; riboflavin biosynthesis; 2-hydroxy-3-oxobutyl phosphate from D-ribulose 5-phosphate: step 1/1. Functionally, catalyzes the conversion of D-ribulose 5-phosphate to formate and 3,4-dihydroxy-2-butanone 4-phosphate. This is 3,4-dihydroxy-2-butanone 4-phosphate synthase from Pelobacter propionicus (strain DSM 2379 / NBRC 103807 / OttBd1).